The following is a 376-amino-acid chain: MSYKFGKLAINKSELCLANVLQAGQSFRWIWDEKLNQYSTTMKIGQQEKYSVVILRQDEENEILEFVAVGDCGNQDALKTHLMKYFRLDVSLKHLFDNVWIPSDKAFAKLSPQGIRILAQEPWETLISFICSSNNNISRITRMCNSLCSNFGNLITTIDGVAYHSFPTSEELTSRATEAKLRELGFGYRAKYIIETARKLVNDKAEANITSDTTYLQSICKDAQYEDVREHLMSYNGVGPKVADCVCLMGLHMDGIVPVDVHVSRIAKRDYQISANKNHLKELRTKYNALPISRKKINLELDHIRLMLFKKWGSYAGWAQGVLFSKEIGGTSGSTTTGTIKKRKWDMIKETEAIVTKQMKLKVELSDLHIKEAKID.

3 residues coordinate DNA: Asn134, Arg139, and Arg189. Lys241 serves as the catalytic Schiff-base intermediate with DNA. Positions 258 and 260 each coordinate 8-oxoguanine. Position 262 (His262) interacts with DNA. Residues Gln320 and Phe324 each coordinate 8-oxoguanine.

Belongs to the type-1 OGG1 family.

The protein localises to the nucleus. The catalysed reaction is 2'-deoxyribonucleotide-(2'-deoxyribose 5'-phosphate)-2'-deoxyribonucleotide-DNA = a 3'-end 2'-deoxyribonucleotide-(2,3-dehydro-2,3-deoxyribose 5'-phosphate)-DNA + a 5'-end 5'-phospho-2'-deoxyribonucleoside-DNA + H(+). In terms of biological role, DNA repair enzyme that incises DNA at 8-oxoG residues. Excises 7,8-dihydro-8-oxoguanine and 2,6-diamino-4-hydroxy-5-N-methylformamidopyrimidine (FAPY) from damaged DNA. Has a beta-lyase activity that nicks DNA 3' to the lesion. The chain is N-glycosylase/DNA lyase (OGG1) from Saccharomyces cerevisiae (strain ATCC 204508 / S288c) (Baker's yeast).